Reading from the N-terminus, the 422-residue chain is Serine--tRNA ligase (422 aa).

L-serine is bound at residue Thr-229–Glu-231. Arg-260–Glu-262 contacts ATP. Residue Glu-283 participates in L-serine binding. ATP is bound at residue Glu-347–Ser-350. Ser-383 is a binding site for L-serine.

The protein belongs to the class-II aminoacyl-tRNA synthetase family. Type-1 seryl-tRNA synthetase subfamily. As to quaternary structure, homodimer. The tRNA molecule binds across the dimer.

The protein localises to the cytoplasm. The catalysed reaction is tRNA(Ser) + L-serine + ATP = L-seryl-tRNA(Ser) + AMP + diphosphate + H(+). It carries out the reaction tRNA(Sec) + L-serine + ATP = L-seryl-tRNA(Sec) + AMP + diphosphate + H(+). Its pathway is aminoacyl-tRNA biosynthesis; selenocysteinyl-tRNA(Sec) biosynthesis; L-seryl-tRNA(Sec) from L-serine and tRNA(Sec): step 1/1. In terms of biological role, catalyzes the attachment of serine to tRNA(Ser). Is also able to aminoacylate tRNA(Sec) with serine, to form the misacylated tRNA L-seryl-tRNA(Sec), which will be further converted into selenocysteinyl-tRNA(Sec). The chain is Serine--tRNA ligase from Geobacter sulfurreducens (strain ATCC 51573 / DSM 12127 / PCA).